The following is a 345-amino-acid chain: DNA-directed RNA polymerase subunit alpha (345 aa).

The interval 1 to 233 (MVRNWCSLIR…KQLQVFVGLH (233 aa)) is alpha N-terminal domain (alpha-NTD). The interval 256–345 (LNDILLRHVE…EEMGEIQEEG (90 aa)) is alpha C-terminal domain (alpha-CTD).

This sequence belongs to the RNA polymerase alpha chain family. Homodimer. The RNAP catalytic core consists of 2 alpha, 1 beta, 1 beta' and 1 omega subunit. When a sigma factor is associated with the core the holoenzyme is formed, which can initiate transcription.

It carries out the reaction RNA(n) + a ribonucleoside 5'-triphosphate = RNA(n+1) + diphosphate. Its function is as follows. DNA-dependent RNA polymerase catalyzes the transcription of DNA into RNA using the four ribonucleoside triphosphates as substrates. The protein is DNA-directed RNA polymerase subunit alpha of Syntrophus aciditrophicus (strain SB).